A 261-amino-acid polypeptide reads, in one-letter code: Histone H1-I (261 aa).

Low complexity predominate over residues 1–22 (MSETEAAPVVAPAAEAAPAAEA). Disordered stretches follow at residues 1 to 63 (MSET…PPYI) and 125 to 261 (FKLS…KGKK). Basic and acidic residues predominate over residues 41 to 50 (APKEPKAPKE). An H15 domain is found at 58 to 129 (THPPYIEMVK…KVKGSFKLSE (72 aa)). The segment covering 133-142 (AKAKKSTPKK) has biased composition (basic residues). 2 tandem repeats follow at residues 136–140 (KKSTP) and 188–192 (KKATP). The tract at residues 136–250 (KKSTPKKAKA…KKAPAKKSTP (115 aa)) is 7 X 5 AA repeats of K-K-[AS]-T-P. The DNA-binding element occupies 139 to 142 (TPKK). A compositionally biased stretch (basic and acidic residues) spans 143-198 (AKADGEAKPKKSEAKPKKAEAVKKTKAPKEKVERPKKEKKEKVEKKKATPKAEKPK). The stretch at 199-203 (KAATP) is one 3; approximate repeat. Repeat copies occupy residues 209–213 (KKATP), 230–234 (KKATP), 236–240 (KKAAP), and 246–250 (KKSTP). Residues 227 to 250 (AKPKKATPSKKAAPKKAPAKKSTP) show a composition bias toward basic residues. Basic and acidic residues predominate over residues 251–261 (KAKEAKSKGKK).

Belongs to the histone H1/H5 family.

It localises to the nucleus. Its subcellular location is the chromosome. Its function is as follows. Histones H1 are necessary for the condensation of nucleosome chains into higher-order structures. The polypeptide is Histone H1-I (H1-I) (Volvox carteri (Green alga)).